The primary structure comprises 503 residues: 2-isopropylmalate synthase (503 aa).

Residues aspartate 1, histidine 189, histidine 191, and asparagine 225 each contribute to the Mn(2+) site. The region spanning 1-254 is the Pyruvate carboxyltransferase domain; sequence DGEQALQASL…STNINHKEIY (254 aa). The regulatory domain stretch occupies residues 379 to 503; that stretch reads SLKFFSVQSI…NKNLKNLKKQ (125 aa).

This sequence belongs to the alpha-IPM synthase/homocitrate synthase family. LeuA type 1 subfamily. As to quaternary structure, homodimer. The cofactor is Mn(2+).

Its subcellular location is the cytoplasm. It carries out the reaction 3-methyl-2-oxobutanoate + acetyl-CoA + H2O = (2S)-2-isopropylmalate + CoA + H(+). It participates in amino-acid biosynthesis; L-leucine biosynthesis; L-leucine from 3-methyl-2-oxobutanoate: step 1/4. Functionally, catalyzes the condensation of the acetyl group of acetyl-CoA with 3-methyl-2-oxobutanoate (2-ketoisovalerate) to form 3-carboxy-3-hydroxy-4-methylpentanoate (2-isopropylmalate). The chain is 2-isopropylmalate synthase from Buchnera aphidicola subsp. Uroleucon ambrosiae.